A 144-amino-acid chain; its full sequence is Galectin b (144 aa).

A Galectin domain is found at 1-138; sequence DHIDLEFDVG…DAVLRKLCVV (138 aa).

In terms of biological role, lectin that binds beta-galactoside and a wide array of complex carbohydrates. This Aplysina lactuca (Marine sponge) protein is Galectin b.